Here is a 336-residue protein sequence, read N- to C-terminus: Glycerol-3-phosphate dehydrogenase [NAD(P)+] (336 aa).

Ser-16, Tyr-17, His-37, and Lys-111 together coordinate NADPH. Sn-glycerol 3-phosphate-binding residues include Lys-111, Gly-140, and Thr-142. Ala-144 is a binding site for NADPH. 5 residues coordinate sn-glycerol 3-phosphate: Lys-196, Asp-249, Ser-259, Arg-260, and Asn-261. The Proton acceptor role is filled by Lys-196. Arg-260 lines the NADPH pocket. Val-284 and Glu-286 together coordinate NADPH.

The protein belongs to the NAD-dependent glycerol-3-phosphate dehydrogenase family.

It is found in the cytoplasm. It carries out the reaction sn-glycerol 3-phosphate + NAD(+) = dihydroxyacetone phosphate + NADH + H(+). The enzyme catalyses sn-glycerol 3-phosphate + NADP(+) = dihydroxyacetone phosphate + NADPH + H(+). The protein operates within membrane lipid metabolism; glycerophospholipid metabolism. Catalyzes the reduction of the glycolytic intermediate dihydroxyacetone phosphate (DHAP) to sn-glycerol 3-phosphate (G3P), the key precursor for phospholipid synthesis. This chain is Glycerol-3-phosphate dehydrogenase [NAD(P)+], found in Actinobacillus pleuropneumoniae serotype 5b (strain L20).